Here is a 419-residue protein sequence, read N- to C-terminus: Peptide chain release factor subunit 1 (419 aa).

This sequence belongs to the eukaryotic release factor 1 family. In terms of assembly, heterodimer of two subunits, one of which binds GTP.

Its subcellular location is the cytoplasm. In terms of biological role, directs the termination of nascent peptide synthesis (translation) in response to the termination codons UAA, UAG and UGA. The polypeptide is Peptide chain release factor subunit 1 (Methanococcus maripaludis (strain C7 / ATCC BAA-1331)).